We begin with the raw amino-acid sequence, 585 residues long: BURP domain-containing protein 17 (585 aa).

Residues 1-20 (MDRIFARFFCFLLIAAVSHA) form the signal peptide. The tract at residues 63–82 (GQRNYKSSVSHVAERSHRVD) is disordered. One can recognise a BURP domain in the interval 363–584 (FFLEKNLQQG…QPDAVVWTRR (222 aa)).

In terms of tissue distribution, expressed in leaves.

The protein is BURP domain-containing protein 17 (BURP17) of Oryza sativa subsp. japonica (Rice).